Consider the following 390-residue polypeptide: Coenzyme A biosynthesis bifunctional protein CoaBC (390 aa).

The phosphopantothenoylcysteine decarboxylase stretch occupies residues 1–188; that stretch reads MDKNKHILIG…NQKDYLKNKK (188 aa). The active-site Proton donor is the C156. Residues 189-390 are phosphopantothenate--cysteine ligase; the sequence is ILITASRTEE…VAKEILKILY (202 aa). CTP contacts are provided by residues D277, K287, 304–307, F323, K338, and K342; that span reads PDII.

This sequence in the N-terminal section; belongs to the HFCD (homo-oligomeric flavin containing Cys decarboxylase) superfamily. The protein in the C-terminal section; belongs to the PPC synthetase family. Mg(2+) serves as cofactor. It depends on FMN as a cofactor.

It carries out the reaction N-[(R)-4-phosphopantothenoyl]-L-cysteine + H(+) = (R)-4'-phosphopantetheine + CO2. The enzyme catalyses (R)-4'-phosphopantothenate + L-cysteine + CTP = N-[(R)-4-phosphopantothenoyl]-L-cysteine + CMP + diphosphate + H(+). Its pathway is cofactor biosynthesis; coenzyme A biosynthesis; CoA from (R)-pantothenate: step 2/5. The protein operates within cofactor biosynthesis; coenzyme A biosynthesis; CoA from (R)-pantothenate: step 3/5. Functionally, catalyzes two sequential steps in the biosynthesis of coenzyme A. In the first step cysteine is conjugated to 4'-phosphopantothenate to form 4-phosphopantothenoylcysteine. In the second step the latter compound is decarboxylated to form 4'-phosphopantotheine. The protein is Coenzyme A biosynthesis bifunctional protein CoaBC of Borreliella burgdorferi (strain ATCC 35210 / DSM 4680 / CIP 102532 / B31) (Borrelia burgdorferi).